An 865-amino-acid chain; its full sequence is MIKAIIGKIIGTRNDRWIKQYKKQVLTINALEPTYEKMSDDELQNAFEELKKRVRSTEKDLQEKTLLEVLPESFAITREASKRILKMCHFDVQLIGGMVLNDGKIAEMKTGEGKTLVATLAVALNALKGESVYVVTVNDYLAHRDSKEMEPLYHFLGYSVGTITASVRDDDERLEIYSKDIVYGTNNEFGFDYLRDNMKYSLEHKVQKSHAFAIVDEVDSILIDEARTPLIISGPVDRRMENYNKADEVAKSMQVEIDFTIDEKNRAILITEEGIKKAENLFGVDNLYKIENAALSHHLDQALKANYLFFIDKDYIVANNEVVIVDEFTGRLSEGRRFSEGLHQALEAKEGVSIKEESQTLADITFQNYFRMFSKLAGMTGTAQTEATEFLEIYNLEVVSIPTNLAIKRKDLNDLIYKSEKEKFDAVILKIKELHDKGQPVLVGTASIEKSETLHALLKKERIPHTVLNAKQHTKEAEIIKDAGLKGAVTIATNMAGRGVDIKLTDEIKELGGLYIIGTERHESRRIDNQLRGRSGRQGDPGTSQFYLSLEDNLLRIFGSDRIKGVMEKLGLKDGEHIESKLVTRAVENAQKKVENLHFESRKHLLEYDDVANEQRKSVYKFRDELLDVNYDISAKIAENREYALNQIFSKLKAFDHQNLSEEELLGLKNILKEDFNAHVSLEDLKKASPIENFVAEKLKSDYENKMKVLDSEQRSRIERIVYLQILDNAWREHLYTMDNLKTGINLRGYNQKDPLVEYKKESYNLFLEFIEDIKTEAIKTFSKIQFENEQDSSDAERYLDNFSEEREHESVTYRHEEALDEDLNVAMKAFAKTPKRNEPCPCQSGKKYKDCCAKSGPKKGLFAK.

Residues Q93, 111-115 (GEGKT), and D501 each bind ATP. Residues C841, C843, C852, and C853 each coordinate Zn(2+).

Belongs to the SecA family. As to quaternary structure, monomer and homodimer. Part of the essential Sec protein translocation apparatus which comprises SecA, SecYEG and auxiliary proteins SecDF-YajC and YidC. Zn(2+) serves as cofactor.

It localises to the cell inner membrane. The protein localises to the cytoplasm. The catalysed reaction is ATP + H2O + cellular proteinSide 1 = ADP + phosphate + cellular proteinSide 2.. Part of the Sec protein translocase complex. Interacts with the SecYEG preprotein conducting channel. Has a central role in coupling the hydrolysis of ATP to the transfer of proteins into and across the cell membrane, serving as an ATP-driven molecular motor driving the stepwise translocation of polypeptide chains across the membrane. The chain is Protein translocase subunit SecA from Helicobacter pylori (strain ATCC 700392 / 26695) (Campylobacter pylori).